The sequence spans 305 residues: J domain-containing protein 1 (305 aa).

The region spanning 91-163 (TPYEVLGLVK…SRRRMYDMYA (73 aa)) is the J domain. A helical membrane pass occupies residues 212–232 (WGMVVWALCMLAGFQVMAFLI).

It belongs to the DnaJ family.

Its subcellular location is the mitochondrion membrane. Functionally, probable chaperone. The sequence is that of J domain-containing protein 1 (JID1) from Eremothecium gossypii (strain ATCC 10895 / CBS 109.51 / FGSC 9923 / NRRL Y-1056) (Yeast).